We begin with the raw amino-acid sequence, 443 residues long: Probable D-serine dehydratase (443 aa).

Lys118 carries the N6-(pyridoxal phosphate)lysine modification.

Belongs to the serine/threonine dehydratase family. DsdA subfamily. It depends on pyridoxal 5'-phosphate as a cofactor.

It carries out the reaction D-serine = pyruvate + NH4(+). In Aeromonas hydrophila subsp. hydrophila (strain ATCC 7966 / DSM 30187 / BCRC 13018 / CCUG 14551 / JCM 1027 / KCTC 2358 / NCIMB 9240 / NCTC 8049), this protein is Probable D-serine dehydratase.